Here is a 347-residue protein sequence, read N- to C-terminus: NADH-ubiquinone oxidoreductase chain 2 (347 aa).

The next 10 membrane-spanning stretches (helical) occupy residues 3-23 (PIIYTTLIMTVMSGTMLVMIS), 25-45 (HWLLIWIGFEMNLLAMIPVLM), 59-79 (YFLTQATASMMLMMAIIINLL), 89-109 (MFNPVAMTMMTMALAMKLGLS), 149-169 (INPNLMLTMAMLSILIGGWGG), 178-198 (IMAYSSIAHMGWMTAVLPYNT), 200-220 (MTILNLLIYITMTLAMFMLLI), 237-257 (MPVITSLMMVTLLSMGGLPPL), 274-294 (ESIIMPTLMAMTALLNLYFYM), and 325-345 (LLPTMIVLSTLVLPMTPALSS).

It belongs to the complex I subunit 2 family. In terms of assembly, core subunit of respiratory chain NADH dehydrogenase (Complex I) which is composed of 45 different subunits. Interacts with TMEM242.

The protein resides in the mitochondrion inner membrane. It catalyses the reaction a ubiquinone + NADH + 5 H(+)(in) = a ubiquinol + NAD(+) + 4 H(+)(out). Core subunit of the mitochondrial membrane respiratory chain NADH dehydrogenase (Complex I) which catalyzes electron transfer from NADH through the respiratory chain, using ubiquinone as an electron acceptor. Essential for the catalytic activity and assembly of complex I. This chain is NADH-ubiquinone oxidoreductase chain 2, found in Sus scrofa (Pig).